The primary structure comprises 967 residues: Vacuolar membrane protease (967 aa).

The Cytoplasmic segment spans residues 1–16 (MARPSLSRSNPLGFTP). A helical transmembrane segment spans residues 17–37 (WPVTVITAVVYLALVVPLLVV). Residues 38–387 (HHVVPSAPSS…SAFVVFELHT (350 aa)) are Vacuolar-facing. Residues N53 and N119 are each glycosylated (N-linked (GlcNAc...) asparagine). Zn(2+) contacts are provided by H171 and D183. Catalysis depends on E217, which acts as the Proton acceptor. Zn(2+) is bound by residues E218, E243, and H316. A helical transmembrane segment spans residues 388–408 (LFALSVTLLVVAPLVLLVTSI). Over 409-441 (ALNRADKMYLFRASASPEDSDGSEAVLLHGVRG) the chain is Cytoplasmic. The chain crosses the membrane as a helical span at residues 442 to 462 (FFRFPFLLVIPTAVTVGLAYL). At 463 to 472 (VTKFNPYIIH) the chain is on the vacuolar side. The chain crosses the membrane as a helical span at residues 473–493 (SSEYAVWSMMISAWVFLAWFV). Topologically, residues 494–507 (SRVADFARPSAFHR) are cytoplasmic. Residues 508-528 (VYTLTWLFLVEWVLLVISTVY) form a helical membrane-spanning segment. At 529 to 532 (ENKY) the chain is on the vacuolar side. A helical transmembrane segment spans residues 533-553 (GLAGGYFVFFAFAGTFLATWI). Residues 554 to 663 (SYLELFALPR…WSIHLPKWVW (110 aa)) are Cytoplasmic-facing. Positions 579-612 (SSHGSRLGTASGEDVEDGEDEDEDDDGTTAEATE) are disordered. Over residues 591 to 606 (EDVEDGEDEDEDDDGT) the composition is skewed to acidic residues. A helical transmembrane segment spans residues 664–684 (VLQFLLTAPLVLTFVGPLALL). At 685–700 (LTSALRQTGQDGSSSL) the chain is on the vacuolar side. The helical transmembrane segment at 701-721 (FIYIAVAALTTLLFIPLLPFI) threads the bilayer. At 722 to 727 (HRYTHH) the chain is on the cytoplasmic side. A helical transmembrane segment spans residues 728 to 748 (IPLFLLCVFAGTLIYNLVAFP). At 749–967 (FSPANRLKLF…LVEGSRRFEI (219 aa)) the chain is on the vacuolar side. 2 N-linked (GlcNAc...) asparagine glycosylation sites follow: N795 and N832.

This sequence belongs to the peptidase M28 family. It depends on Zn(2+) as a cofactor.

It localises to the vacuole membrane. In terms of biological role, may be involved in vacuolar sorting and osmoregulation. This Neosartorya fischeri (strain ATCC 1020 / DSM 3700 / CBS 544.65 / FGSC A1164 / JCM 1740 / NRRL 181 / WB 181) (Aspergillus fischerianus) protein is Vacuolar membrane protease.